The sequence spans 542 residues: Glutamyl-tRNA reductase 2, chloroplastic (542 aa).

Residues 142-145 (TCNR), Ser-202, 207-209 (EGQ), and Gln-213 contribute to the substrate site. Catalysis depends on Cys-143, which acts as the Nucleophile. 284–289 (GAGKMG) contacts NADP(+).

This sequence belongs to the glutamyl-tRNA reductase family. As to expression, found in all tissues examined.

The protein localises to the plastid. Its subcellular location is the chloroplast. The enzyme catalyses (S)-4-amino-5-oxopentanoate + tRNA(Glu) + NADP(+) = L-glutamyl-tRNA(Glu) + NADPH + H(+). It functions in the pathway porphyrin-containing compound metabolism; protoporphyrin-IX biosynthesis; 5-aminolevulinate from L-glutamyl-tRNA(Glu): step 1/2. In terms of biological role, catalyzes the NADPH-dependent reduction of glutamyl-tRNA(Glu) to glutamate 1-semialdehyde (GSA). The sequence is that of Glutamyl-tRNA reductase 2, chloroplastic (HEMA2) from Cucumis sativus (Cucumber).